The chain runs to 121 residues: Ribonuclease CL2 (121 aa).

Substrate is bound by residues Lys6 and Arg9. His11 (proton acceptor) is an active-site residue. 3 disulfides stabilise this stretch: Cys26–Cys81, Cys42–Cys92, and Cys60–Cys107. Substrate contacts are provided by residues 43-47 and Arg82; that span reads KPSNT. His114 acts as the Proton donor in catalysis.

It belongs to the pancreatic ribonuclease family.

It is found in the secreted. Its function is as follows. Pyrimidine-specific nuclease with preference for C. The sequence is that of Ribonuclease CL2 from Gallus gallus (Chicken).